Here is a 138-residue protein sequence, read N- to C-terminus: Small ribosomal subunit protein uS11c (138 aa).

Positions 1-22 (MAKPILRIGSRKNTRSGSRKNV) are disordered. Residues 9 to 22 (GSRKNTRSGSRKNV) are compositionally biased toward basic residues.

It belongs to the universal ribosomal protein uS11 family. As to quaternary structure, part of the 30S ribosomal subunit.

The protein resides in the plastid. The protein localises to the chloroplast. The polypeptide is Small ribosomal subunit protein uS11c (Arabis hirsuta (Hairy rock-cress)).